A 304-amino-acid polypeptide reads, in one-letter code: Dermonecrotic toxin LiSicTox-betaIA1i (304 aa).

The N-terminal stretch at 1–21 (MLLPAVISFIVYAVFLQEANG) is a signal peptide. The propeptide occupies 22–26 (HAAER). The active site involves histidine 38. Mg(2+)-binding residues include glutamate 58 and aspartate 60. The active-site Nucleophile is the histidine 74. Cystine bridges form between cysteine 78/cysteine 84 and cysteine 80/cysteine 223. Mg(2+) is bound at residue aspartate 118.

The protein belongs to the arthropod phospholipase D family. Class II subfamily. Class IIb sub-subfamily. It depends on Mg(2+) as a cofactor. Expressed by the venom gland.

The protein resides in the secreted. The catalysed reaction is an N-(acyl)-sphingosylphosphocholine = an N-(acyl)-sphingosyl-1,3-cyclic phosphate + choline. The enzyme catalyses an N-(acyl)-sphingosylphosphoethanolamine = an N-(acyl)-sphingosyl-1,3-cyclic phosphate + ethanolamine. It carries out the reaction a 1-acyl-sn-glycero-3-phosphocholine = a 1-acyl-sn-glycero-2,3-cyclic phosphate + choline. It catalyses the reaction a 1-acyl-sn-glycero-3-phosphoethanolamine = a 1-acyl-sn-glycero-2,3-cyclic phosphate + ethanolamine. Its function is as follows. Dermonecrotic toxins cleave the phosphodiester linkage between the phosphate and headgroup of certain phospholipids (sphingolipid and lysolipid substrates), forming an alcohol (often choline) and a cyclic phosphate. This toxin acts on sphingomyelin (SM) with low activity. It may also act on ceramide phosphoethanolamine (CPE), lysophosphatidylcholine (LPC) and lysophosphatidylethanolamine (LPE), but not on lysophosphatidylserine (LPS), and lysophosphatidylglycerol (LPG). It acts by transphosphatidylation, releasing exclusively cyclic phosphate products as second products. Induces inflammatory response but no or very weak hemolysis, dermonecrosis, vascular permeability, edema, and cytotoxicity against renal epithelial cells. Causes swelling and erythema. In vivo, is not lethal to mice when intraperitoneally injected. This chain is Dermonecrotic toxin LiSicTox-betaIA1i, found in Loxosceles intermedia (Brown spider).